The primary structure comprises 686 residues: Band 4.1-like protein 4A (686 aa).

The 289-residue stretch at 11-299 folds into the FERM domain; the sequence is FYCEVLLLDE…EHHTFFRMPD (289 aa). At Ser-304 the chain carries Phosphoserine. 2 stretches are compositionally biased toward polar residues: residues 332–346 and 357–382; these read DLSI…NVVR and AQTQ…NEGT. Residues 332–669 form a disordered region; sequence DLSIQLPRPN…LSTINPAGKP (338 aa). Phosphoserine occurs at positions 389, 393, and 402. Polar residues-rich tracts occupy residues 418–428 and 442–455; these read GPQSGLYNSSS and RNLS…SSQL. Over residues 479-489 the composition is skewed to low complexity; sequence RCNTSSGSESE. Composition is skewed to basic and acidic residues over residues 518 to 527 and 547 to 561; these read VLRRQKEKNQ and QAKE…KELV. Residues 588 to 601 show a composition bias toward basic residues; sequence IRHSHSPRSYRQYR. Residues 648–658 show a composition bias toward basic and acidic residues; it reads GSKDSLIEEKS.

As to expression, brain, heart, lung, liver and spleen. Not detected in thymus and kidney.

The protein resides in the cytoplasm. It localises to the cytoskeleton. The polypeptide is Band 4.1-like protein 4A (Mus musculus (Mouse)).